The chain runs to 120 residues: Small ribosomal subunit protein eS25 (120 aa).

The tract at residues 1 to 32 (MPPKAGQTKKAKMEAANKGAKKTTKKWSKGQS) is disordered. Residues 19–28 (GAKKTTKKWS) show a composition bias toward basic residues.

The protein belongs to the eukaryotic ribosomal protein eS25 family.

This chain is Small ribosomal subunit protein eS25 (RPS25), found in Leishmania infantum.